Consider the following 291-residue polypeptide: Nucleotide-binding protein LMHCC_0126 (291 aa).

Residue 13 to 20 (GMSGAGKT) participates in ATP binding. 63–66 (DLRG) lines the GTP pocket.

It belongs to the RapZ-like family.

Functionally, displays ATPase and GTPase activities. This Listeria monocytogenes serotype 4a (strain HCC23) protein is Nucleotide-binding protein LMHCC_0126.